The primary structure comprises 151 residues: Pseudo histidine-containing phosphotransfer protein 2 (151 aa).

One can recognise an HPt domain in the interval 38–133; it reads SPNFVEEVAA…ATLKQKLESY (96 aa).

In terms of biological role, functions as a two-component phosphorelay mediator between cytokinin sensor histidine kinases and response regulators (B-type ARRs). Plays an important role in propagating cytokinin signal transduction. The sequence is that of Pseudo histidine-containing phosphotransfer protein 2 from Oryza sativa subsp. japonica (Rice).